Consider the following 149-residue polypeptide: Arginine repressor (149 aa).

The protein belongs to the ArgR family.

It localises to the cytoplasm. The protein operates within amino-acid biosynthesis; L-arginine biosynthesis [regulation]. In terms of biological role, regulates arginine biosynthesis genes. The sequence is that of Arginine repressor from Bacillus mycoides (strain KBAB4) (Bacillus weihenstephanensis).